We begin with the raw amino-acid sequence, 279 residues long: Undecaprenyl-diphosphatase (279 aa).

The next 8 helical transmembrane spans lie at 1 to 21, 39 to 59, 96 to 116, 128 to 148, 155 to 175, 201 to 221, 231 to 251, and 259 to 279; these read MVLEAVLLGIVQGITEFLPIS, GRFFLSSVQLGTSFALILYFF, LLLVTGTIPVVLLGFLLVRFV, FTMGVALIVFGLLLGFADALF, IFQITFIESVLIGAAQVFAII, FSFLLSLPVTFIGGMYGLVAG, YSLIGAIVSFVVGLLVVSALL, and FVLFVYYRVLFGLFLVIVSFF.

The protein belongs to the UppP family.

It localises to the cell membrane. It catalyses the reaction di-trans,octa-cis-undecaprenyl diphosphate + H2O = di-trans,octa-cis-undecaprenyl phosphate + phosphate + H(+). Functionally, catalyzes the dephosphorylation of undecaprenyl diphosphate (UPP). Confers resistance to bacitracin. The chain is Undecaprenyl-diphosphatase from Tropheryma whipplei (strain Twist) (Whipple's bacillus).